Consider the following 103-residue polypeptide: Large ribosomal subunit protein uL23c (103 aa).

The protein belongs to the universal ribosomal protein uL23 family. In terms of assembly, part of the 50S ribosomal subunit.

Its subcellular location is the plastid. The protein localises to the chloroplast. Functionally, binds to 23S rRNA. This Gracilaria tenuistipitata var. liui (Red alga) protein is Large ribosomal subunit protein uL23c (rpl23).